Consider the following 1559-residue polypeptide: Arginine-glutamic acid dipeptide repeats protein (1559 aa).

Basic and acidic residues predominate over residues 1 to 36 (MTADKDKDKDKEKDRDRDRDRERDKRDKARESENAR). Positions 1–89 (MTADKDKDKD…KKKSRYERTD (89 aa)) are disordered. 2 positions are modified to phosphoserine: Ser53 and Ser56. Residues 73 to 84 (KSRKKPPKKKSR) are compositionally biased toward basic residues. Residues 102–282 (VVYRPGDCVY…PETRRLNSTQ (181 aa)) form the BAH domain. At Thr119 the chain carries Phosphothreonine. Residues Ser141 and Ser303 each carry the phosphoserine modification. Positions 283–386 (GEIRVGPSHQ…KALQRLVKKP (104 aa)) constitute an ELM2 domain. In terms of domain architecture, SANT spans 390 to 442 (LIEKCWTEDEVKRFVKGLRQYGKNFFRIRKELLPNKETGELITFYYYWKKTPE). Positions 463–494 (TRTASTPVNTPSRPPSSEFLDLSSASEDDFDS) are disordered. A compositionally biased stretch (polar residues) spans 464–473 (RTASTPVNTP). Residues 478–487 (SSEFLDLSSA) are compositionally biased toward low complexity. The segment at 507-532 (RHCFTTTSKDWHHGGRENILLCTDCR) adopts a GATA-type zinc-finger fold. The interval 541 to 1125 (LPPIEKPVDP…PSHASQSARF (585 aa)) is disordered. Lys559 is covalently cross-linked (Glycyl lysine isopeptide (Lys-Gly) (interchain with G-Cter in SUMO2)). Residues Ser593, Ser599, and Ser612 each carry the phosphoserine modification. Over residues 608–622 (SGRNSPSAASTSSND) the composition is skewed to low complexity. Residues 623 to 639 (SKAEAVKKSAKKVKEEA) are compositionally biased toward basic and acidic residues. A Glycyl lysine isopeptide (Lys-Gly) (interchain with G-Cter in SUMO2) cross-link involves residue Lys636. A phosphoserine mark is found at Ser641, Ser655, Ser674, and Ser678. Residues 651 to 672 (EKVASDTEDTDRATSKKTKTQE) show a composition bias toward basic and acidic residues. Residues 687 to 707 (SDSRSVNDEGSSDPKDIDQDN) show a composition bias toward basic and acidic residues. Over residues 708–735 (RSTSPSIPSPQDNESDSDSSAQQQMLQT) the composition is skewed to polar residues. Low complexity predominate over residues 736-761 (QPPALQAPSGAASAPSTAPPGTTQLP). The segment covering 768 to 791 (SATTVPPQGSPATSQPPNQTQSTV) has biased composition (polar residues). Residues 805–822 (LHPPRLPSPHPPLQPMTA) are compositionally biased toward pro residues. Positions 890–900 (QLPASQSALQP) are enriched in low complexity. Residues 901 to 931 (QQPPREQPLPPAPLAMPHIKPPPTTPIPQLP) show a composition bias toward pro residues. The span at 961-971 (KPLSSLSTHHP) shows a compositional bias: low complexity. Pro residues predominate over residues 1027–1053 (PQHPFVPGGPPPITPPSCPPTSTPPAG). The span at 1054 to 1068 (PSSSSQPPCSAAVSS) shows a compositional bias: low complexity. Ser1098, Ser1105, and Ser1107 each carry phosphoserine. The span at 1098–1109 (SPPPPPRSPSPE) shows a compositional bias: pro residues. The residue at position 1111 (Thr1111) is a Phosphothreonine. Positions 1148–1205 (GSKLAKKREEAIEKAKREAEQKAREEREREKEKEKEREREREREREAERAAQKASSSA) form a coiled coil. Lys1150 carries the post-translational modification N6-acetyllysine. Residues 1154 to 1198 (KREEAIEKAKREAEQKAREEREREKEKEKEREREREREREAERAA) are compositionally biased toward basic and acidic residues. The tract at residues 1154-1239 (KREEAIEKAK…TTIAAVPPYI (86 aa)) is disordered. Tyr1252 carries the post-translational modification Phosphotyrosine. Ser1259 is subject to Phosphoserine.

As to quaternary structure, interacts with HDAC1 and ATN1. Interaction with ATN1 is improved when the poly-Gln region of ATN1 is extended. In terms of tissue distribution, widely expressed.

The protein resides in the nucleus. Its subcellular location is the PML body. Plays a role as a transcriptional repressor during development. May play a role in the control of cell survival. Interacts with FAT1. This Rattus norvegicus (Rat) protein is Arginine-glutamic acid dipeptide repeats protein (Rere).